The sequence spans 385 residues: Mannitol-1-phosphate 5-dehydrogenase (385 aa).

3 to 14 (ALQFGAGNIGRG) contacts NAD(+).

It belongs to the mannitol dehydrogenase family.

It catalyses the reaction D-mannitol 1-phosphate + NAD(+) = beta-D-fructose 6-phosphate + NADH + H(+). The polypeptide is Mannitol-1-phosphate 5-dehydrogenase (Buchnera aphidicola subsp. Acyrthosiphon pisum (strain 5A)).